The chain runs to 208 residues: uncharacterized protein (208 aa).

Disordered regions lie at residues 1-78 (MDLF…SPTE) and 154-208 (RRRS…PRNY). The span at 40–51 (KNHKKAQPRRTT) shows a compositional bias: basic residues. Positions 179-197 (ANSSSPNPTATGSETSYGS) are enriched in polar residues.

This is an uncharacterized protein from Caenorhabditis elegans.